A 300-amino-acid polypeptide reads, in one-letter code: Meiosis-specific cyclin crs1 (300 aa).

Positions 61–183 constitute a Cyclin N-terminal domain; sequence IIEQEKKGLT…VLALLNFDIY (123 aa).

This sequence belongs to the cyclin family. Cyclin AB subfamily.

The protein resides in the cytoplasm. The protein localises to the nucleus. Functionally, has a role in meiotic chromosome segregation. In Schizosaccharomyces pombe (strain 972 / ATCC 24843) (Fission yeast), this protein is Meiosis-specific cyclin crs1 (crs1).